The following is a 496-amino-acid chain: Angiopoietin-2 (496 aa).

An N-terminal signal peptide occupies residues 1 to 18 (MWQLVFLTLSCDLAVATA). Residues Asn-90, Asn-120, Asn-134, Asn-152, Asn-241, and Asn-304 are each glycosylated (N-linked (GlcNAc...) asparagine). Residues 167–249 (STNKLEKQIL…VNNSVLQKQQ (83 aa)) adopt a coiled-coil conformation. One can recognise a Fibrinogen C-terminal domain in the interval 275–495 (KDEQIIFRDC…ATTMMIRPAD (221 aa)). A disulfide bond links Cys-284 and Cys-313. Ca(2+)-binding residues include Asp-429, Asp-431, Cys-433, and Cys-435. Intrachain disulfides connect Cys-433-Cys-435 and Cys-437-Cys-450.

Interacts with TEK/TIE2, competing for the same binding site as ANGPT1. Interacts with ITGA5. Interacts with SVEP1/polydom. Interacts with THBD; this interaction significantly inhibits the generation of activated PC and TAFIa/CPB2 by the thrombin/thrombomodulin complex.

It is found in the secreted. Binds to TEK/TIE2, competing for the ANGPT1 binding site, and modulating ANGPT1 signaling. Can induce tyrosine phosphorylation of TEK/TIE2 in the absence of ANGPT1. In the absence of angiogenic inducers, such as VEGF, ANGPT2-mediated loosening of cell-matrix contacts may induce endothelial cell apoptosis with consequent vascular regression. In concert with VEGF, it may facilitate endothelial cell migration and proliferation, thus serving as a permissive angiogenic signal. Involved in the regulation of lymphangiogenesis. The sequence is that of Angiopoietin-2 (ANGPT2) from Bos taurus (Bovine).